Reading from the N-terminus, the 258-residue chain is Small ribosomal subunit protein uS3 (258 aa).

Residues 16 to 85 (IDEYLEKELE…NPQVEVKEVD (70 aa)) enclose the KH type-2 domain. The disordered stretch occupies residues 198-258 (RVTETPAEEA…KDADGEESEK (61 aa)). Positions 203 to 245 (PAEEASEASEVVEDLEEVEDLEEIEDLEEVEDLEEVEDLEDTE) are enriched in acidic residues.

The protein belongs to the universal ribosomal protein uS3 family. Part of the 30S ribosomal subunit.

Binds the lower part of the 30S subunit head. This chain is Small ribosomal subunit protein uS3, found in Methanothermobacter thermautotrophicus (strain ATCC 29096 / DSM 1053 / JCM 10044 / NBRC 100330 / Delta H) (Methanobacterium thermoautotrophicum).